Reading from the N-terminus, the 506-residue chain is Maturase K (506 aa).

It belongs to the intron maturase 2 family. MatK subfamily.

Its subcellular location is the plastid. It localises to the chloroplast. Functionally, usually encoded in the trnK tRNA gene intron. Probably assists in splicing its own and other chloroplast group II introns. This chain is Maturase K, found in Cytisus scoparius (Scotch broom).